A 1451-amino-acid polypeptide reads, in one-letter code: DNA polymerase III PolC-type (1451 aa).

An Exonuclease domain is found at 416 to 575 (FVIFDIETTG…YDTEALKKVF (160 aa)).

The protein belongs to the DNA polymerase type-C family. PolC subfamily.

It localises to the cytoplasm. It catalyses the reaction DNA(n) + a 2'-deoxyribonucleoside 5'-triphosphate = DNA(n+1) + diphosphate. Functionally, required for replicative DNA synthesis. This DNA polymerase also exhibits 3' to 5' exonuclease activity. This Mycoplasma genitalium (strain ATCC 33530 / DSM 19775 / NCTC 10195 / G37) (Mycoplasmoides genitalium) protein is DNA polymerase III PolC-type.